A 218-amino-acid polypeptide reads, in one-letter code: Lactosylceramide 4-alpha-galactosyltransferase (218 aa).

The DXD motif signature appears at 57–59; it reads DTD.

The protein belongs to the glycosyltransferase 32 family.

The protein localises to the golgi apparatus membrane. It carries out the reaction a beta-D-Gal-(1-&gt;4)-beta-D-Glc-(1&lt;-&gt;1)-Cer(d18:1(4E)) + UDP-alpha-D-galactose = a globoside Gb3Cer (d18:1(4E)) + UDP + H(+). It catalyses the reaction a beta-D-Gal-(1&lt;-&gt;1')-ceramide + UDP-alpha-D-galactose = alpha-D-Gal-(1-&gt;4)-beta-D-Gal-(1&lt;-&gt;1')-Cer + UDP + H(+). The protein operates within glycolipid biosynthesis. Catalyzes the transfer of galactose from UDP-alpha-D-galactose to lactosylceramide/beta-D-galactosyl-(1-&gt;4)-beta-D-glucosyl-(1&lt;-&gt;1)-ceramide(d18:1(4E)) to produce globotriaosylceramide/globoside Gb3Cer (d18:1(4E)). Also able to transfer galactose to galactosylceramide/beta-D-Gal-(1&lt;-&gt;1')-Cer. Globoside Gb3Cer is a glycosphingolipid of the globo serie, one of the major types of neutral root structures of glycosphingolipids, that constitute a significant portion of mammalian cell membranes. In Pongo pygmaeus (Bornean orangutan), this protein is Lactosylceramide 4-alpha-galactosyltransferase (A4GALT).